Reading from the N-terminus, the 214-residue chain is Adenylate kinase (214 aa).

14–19 (GSGKGT) contacts ATP. Residues 32 to 61 (SVGKVLRTVMESNTAEADVVKKFIKSGKLV) form an NMP region. Residues Arg-38, 59-61 (KLV), 87-90 (GYPR), and Gln-94 contribute to the AMP site. The segment at 124 to 162 (GRISCTDCGTIYNKLYCMPKINGVCDICNSSSFQNRVDD) is LID. ATP is bound at residue Arg-125. The Zn(2+) site is built by Cys-128 and Cys-131. 134 to 135 (IY) contacts ATP. Residues Cys-148 and Cys-151 each contribute to the Zn(2+) site. Positions 159 and 170 each coordinate AMP. ATP is bound at residue Gln-198.

The protein belongs to the adenylate kinase family. In terms of assembly, monomer.

The protein localises to the cytoplasm. The catalysed reaction is AMP + ATP = 2 ADP. The protein operates within purine metabolism; AMP biosynthesis via salvage pathway; AMP from ADP: step 1/1. Catalyzes the reversible transfer of the terminal phosphate group between ATP and AMP. Plays an important role in cellular energy homeostasis and in adenine nucleotide metabolism. The polypeptide is Adenylate kinase (Orientia tsutsugamushi (strain Ikeda) (Rickettsia tsutsugamushi)).